A 320-amino-acid chain; its full sequence is GTPase Era (320 aa).

The 169-residue stretch at 25–193 (HCGFIAIVGR…RKHVRNHLPK (169 aa)) folds into the Era-type G domain. Residues 33 to 40 (GRPNVGKS) are G1. A GTP-binding site is contributed by 33 to 40 (GRPNVGKS). The interval 59 to 63 (QTTRH) is G2. The interval 80–83 (DTPG) is G3. Residues 80-84 (DTPGL) and 142-145 (NKVD) each bind GTP. Residues 142 to 145 (NKVD) are G4. The segment at 172-174 (ISA) is G5. The KH type-2 domain maps to 216–302 (VREKLMRFTG…YLETWVKVKS (87 aa)).

It belongs to the TRAFAC class TrmE-Era-EngA-EngB-Septin-like GTPase superfamily. Era GTPase family. As to quaternary structure, monomer.

It localises to the cytoplasm. The protein localises to the cell inner membrane. Its function is as follows. An essential GTPase that binds both GDP and GTP, with rapid nucleotide exchange. Plays a role in 16S rRNA processing and 30S ribosomal subunit biogenesis and possibly also in cell cycle regulation and energy metabolism. This is GTPase Era from Vibrio parahaemolyticus serotype O3:K6 (strain RIMD 2210633).